The chain runs to 271 residues: Mannosyl-3-phosphoglycerate phosphatase (271 aa).

Aspartate 13 (nucleophile) is an active-site residue. Mg(2+) contacts are provided by aspartate 13, aspartate 15, and aspartate 214.

Belongs to the HAD-like hydrolase superfamily. MPGP family. Mg(2+) serves as cofactor.

Its subcellular location is the cytoplasm. The enzyme catalyses 2-O-(alpha-D-mannosyl)-3-phosphoglycerate + H2O = (2R)-2-O-(alpha-D-mannosyl)-glycerate + phosphate. This Escherichia coli O45:K1 (strain S88 / ExPEC) protein is Mannosyl-3-phosphoglycerate phosphatase.